Here is a 427-residue protein sequence, read N- to C-terminus: Histidine--tRNA ligase (427 aa).

This sequence belongs to the class-II aminoacyl-tRNA synthetase family. In terms of assembly, homodimer.

The protein localises to the cytoplasm. It carries out the reaction tRNA(His) + L-histidine + ATP = L-histidyl-tRNA(His) + AMP + diphosphate + H(+). This Chloroherpeton thalassium (strain ATCC 35110 / GB-78) protein is Histidine--tRNA ligase.